Reading from the N-terminus, the 369-residue chain is Histidinol-phosphate aminotransferase (369 aa).

Lys-223 carries the N6-(pyridoxal phosphate)lysine modification.

This sequence belongs to the class-II pyridoxal-phosphate-dependent aminotransferase family. Histidinol-phosphate aminotransferase subfamily. As to quaternary structure, homodimer. It depends on pyridoxal 5'-phosphate as a cofactor.

The enzyme catalyses L-histidinol phosphate + 2-oxoglutarate = 3-(imidazol-4-yl)-2-oxopropyl phosphate + L-glutamate. It functions in the pathway amino-acid biosynthesis; L-histidine biosynthesis; L-histidine from 5-phospho-alpha-D-ribose 1-diphosphate: step 7/9. The chain is Histidinol-phosphate aminotransferase from Shouchella clausii (strain KSM-K16) (Alkalihalobacillus clausii).